The following is a 366-amino-acid chain: D-alanine--D-alanine ligase (366 aa).

Residues 146–352 enclose the ATP-grasp domain; it reads KICFEHAGLQ…YTELINRLIE (207 aa). 179-234 lines the ATP pocket; that stretch reads EKKLRYPMFVKPANMGSSVGISKAHNRNELIEAIELALAYDRKFLIEKAINAREME. Mg(2+)-binding residues include D305, E319, and N321.

The protein belongs to the D-alanine--D-alanine ligase family. Mg(2+) serves as cofactor. The cofactor is Mn(2+).

It localises to the cytoplasm. The catalysed reaction is 2 D-alanine + ATP = D-alanyl-D-alanine + ADP + phosphate + H(+). Its pathway is cell wall biogenesis; peptidoglycan biosynthesis. Its function is as follows. Cell wall formation. In Chloroherpeton thalassium (strain ATCC 35110 / GB-78), this protein is D-alanine--D-alanine ligase.